Here is a 43-residue protein sequence, read N- to C-terminus: Augerpeptide hhe9.2 (43 aa).

The 39-residue stretch at 2-40 (EEVGCFPNVCKNDGNCSIETSTGMTRCQCLEGYTGHVCE) folds into the EGF-like domain. Disulfide bonds link cysteine 6-cysteine 28, cysteine 11-cysteine 30, and cysteine 17-cysteine 39.

In terms of tissue distribution, expressed by the venom duct.

Its subcellular location is the secreted. The protein is Augerpeptide hhe9.2 of Hastula hectica (Sea snail).